We begin with the raw amino-acid sequence, 337 residues long: MKIDTSLTMPQLPEALSQAGLQFAVATEEDFDEIMAMSQDIYGGLDYLPTRYTSWLQETNRTVILARKQGKVIALESVCVIDNGETMLVEGLRVAPQERGKGVAGVLLRFCCELVKSKYPEVKVTRLTRDDQLGPKDFQKYRLITKQGILLVRFRAEDLKLRLSELNLGGDIQSSLSTSSSNTPPVRLDHTAIHRLYLTTDLMQGVLPNATIIQDWQPFKPLPSNMAILLKKDIDWMVDDVANPTMASLCTFPYRVPVGDDWYYLNIDMFGKDLDLAQQQFLCHLQRHTTTLKGHVMCQMFLDPPLWKPMAEFCNKTLSVELVKEYTEQCVVESDVV.

Positions 1–2 (MK) are cleaved as a propeptide — removed in mature form. Residues 21-156 (LQFAVATEED…QGILLVRFRA (136 aa)) enclose the N-acetyltransferase domain.

The enzyme catalyses L-histidine + acetyl-CoA = N(alpha)-acetyl-L-histidine + CoA + H(+). Functionally, enzyme responsible for the N-acetyl-histidine (NAH) synthesis, which is a major constituent of brain and lens of ectothermic vertebrates. The protein is Histidine N-acetyltransferase (hisat) of Scomber australasicus (Blue mackerel).